The chain runs to 314 residues: Small ribosomal subunit protein uS2 (314 aa).

Composition is skewed to basic and acidic residues over residues 244–265 (GGHDERREQEDRDAASERGHKD) and 271–287 (DRRGGPRERREPREDRA). The tract at residues 244–314 (GGHDERREQE…AAPEAAPAKE (71 aa)) is disordered. Residues 302 to 314 (APAAAPEAAPAKE) are compositionally biased toward low complexity.

The protein belongs to the universal ribosomal protein uS2 family.

This is Small ribosomal subunit protein uS2 from Anaeromyxobacter dehalogenans (strain 2CP-C).